The sequence spans 382 residues: Chaperone protein DnaJ (382 aa).

The 66-residue stretch at 5 to 70 folds into the J domain; the sequence is DYYEVLGLKK…QKRAAYDQYG (66 aa). Residues 134–212 form a CR-type zinc finger; it reads GTTKDIQINT…CHGEGRVHKK (79 aa). The Zn(2+) site is built by C147, C150, C164, C167, C186, C189, C200, and C203. 4 CXXCXGXG motif repeats span residues 147–154, 164–171, 186–193, and 200–207; these read CDSCGGSG, CPHCHGSG, CPSCHGSG, and CRSCHGEG.

The protein belongs to the DnaJ family. In terms of assembly, homodimer. Zn(2+) serves as cofactor.

The protein resides in the cytoplasm. Participates actively in the response to hyperosmotic and heat shock by preventing the aggregation of stress-denatured proteins and by disaggregating proteins, also in an autonomous, DnaK-independent fashion. Unfolded proteins bind initially to DnaJ; upon interaction with the DnaJ-bound protein, DnaK hydrolyzes its bound ATP, resulting in the formation of a stable complex. GrpE releases ADP from DnaK; ATP binding to DnaK triggers the release of the substrate protein, thus completing the reaction cycle. Several rounds of ATP-dependent interactions between DnaJ, DnaK and GrpE are required for fully efficient folding. Also involved, together with DnaK and GrpE, in the DNA replication of plasmids through activation of initiation proteins. The polypeptide is Chaperone protein DnaJ (Haemophilus influenzae (strain PittGG)).